A 240-amino-acid chain; its full sequence is Adenosylcobinamide-GDP ribazoletransferase (240 aa).

The next 5 helical transmembrane spans lie at 31–51, 57–77, 109–129, 133–153, and 185–205; these read LLYYPLVGLLFGLLLWLASHL, APLHAALLLTAWVLLSGALHL, IAVVTLVLVLLLKFCALWVLV, VGAQLLLAPLIGRTAMLGLFL, and LFCLLLGGWVVLLAVAVFAWL.

Belongs to the CobS family. Mg(2+) is required as a cofactor.

Its subcellular location is the cell inner membrane. The enzyme catalyses alpha-ribazole + adenosylcob(III)inamide-GDP = adenosylcob(III)alamin + GMP + H(+). It carries out the reaction alpha-ribazole 5'-phosphate + adenosylcob(III)inamide-GDP = adenosylcob(III)alamin 5'-phosphate + GMP + H(+). It functions in the pathway cofactor biosynthesis; adenosylcobalamin biosynthesis; adenosylcobalamin from cob(II)yrinate a,c-diamide: step 7/7. Its function is as follows. Joins adenosylcobinamide-GDP and alpha-ribazole to generate adenosylcobalamin (Ado-cobalamin). Also synthesizes adenosylcobalamin 5'-phosphate from adenosylcobinamide-GDP and alpha-ribazole 5'-phosphate. This chain is Adenosylcobinamide-GDP ribazoletransferase, found in Pseudomonas putida (strain GB-1).